The chain runs to 394 residues: Probable cytosolic iron-sulfur protein assembly protein 1 (394 aa).

7 WD repeats span residues 10–49, 56–108, 144–184, 191–230, 237–284, 313–352, and 359–394; these read AHND…NFPL, AHKR…EQDS, GHEN…EEFE, DHQH…DDWS, GHGG…TEQI, IHKY…KWEI, and AHGV…IWEP.

Belongs to the WD repeat CIA1 family. In terms of assembly, interacts with NAR1.

The protein localises to the cytoplasm. It is found in the nucleus. Functionally, essential component of the cytosolic iron-sulfur (Fe/S) protein assembly machinery. Required for the maturation of extramitochondrial Fe/S proteins. The protein is Probable cytosolic iron-sulfur protein assembly protein 1 of Debaryomyces hansenii (strain ATCC 36239 / CBS 767 / BCRC 21394 / JCM 1990 / NBRC 0083 / IGC 2968) (Yeast).